The primary structure comprises 121 residues: UPF0344 protein BC_1150 (121 aa).

Transmembrane regions (helical) follow at residues 6–26 (ITAW…YSAG), 38–58 (LMYI…VKTA), 65–85 (WYGL…MVLV), and 92–112 (PTGA…YLGL).

It belongs to the UPF0344 family.

The protein resides in the cell membrane. This chain is UPF0344 protein BC_1150, found in Bacillus cereus (strain ATCC 14579 / DSM 31 / CCUG 7414 / JCM 2152 / NBRC 15305 / NCIMB 9373 / NCTC 2599 / NRRL B-3711).